We begin with the raw amino-acid sequence, 121 residues long: Putative iron-sulfur cluster insertion protein ErpA (121 aa).

3 residues coordinate iron-sulfur cluster: Cys-49, Cys-113, and Cys-115.

This sequence belongs to the HesB/IscA family. In terms of assembly, homodimer. Iron-sulfur cluster is required as a cofactor.

Its function is as follows. Required for insertion of 4Fe-4S clusters. The protein is Putative iron-sulfur cluster insertion protein ErpA of Methylibium petroleiphilum (strain ATCC BAA-1232 / LMG 22953 / PM1).